Here is a 303-residue protein sequence, read N- to C-terminus: MKKIKCALIGPGNIGTDLLAKLKRSSVLEPVWMVGIDPESEGLNRARELGIKTTAEGVDGLLPHVLADGVQIAFDATSAYVHAENARKLNALGVMMIDLTPAAIGPYCVPPVNLKEHLGKREMNVNMVTCGGQATIPMVAAVSRVQPVAYGEIVATVSSRSVGPGTRKNIDEFTRTTAGAVEKVGGARKGKAIIIINPAEPPLMMRDTIHCLTETEPDQQRIAESIHAMIEEVQKYVPGYRLVNGPVFDGKRVTVFMEVAGLGDYLPTYAGNLDIMTAAAARTAEMFAEEMIAGNLTLEPVVA.

The active-site Acyl-thioester intermediate is C130. NAD(+) is bound by residues 161–169 (SVGPGTRKN) and N272.

This sequence belongs to the acetaldehyde dehydrogenase family.

The catalysed reaction is acetaldehyde + NAD(+) + CoA = acetyl-CoA + NADH + H(+). The polypeptide is Acetaldehyde dehydrogenase 1 (Cupriavidus metallidurans (strain ATCC 43123 / DSM 2839 / NBRC 102507 / CH34) (Ralstonia metallidurans)).